Consider the following 405-residue polypeptide: Zinc finger protein ubi-d4 (405 aa).

Disordered regions lie at residues 80–147, 165–194, 210–230, and 248–280; these read RKKR…GEFP, DDLDDEDYEEDTPKRRGKGKAKGKGVGGAR, ACDNSYKQKHSLKPPDRVCGK, and AEEEGDDKDDSQPPTPVSQRSEEQKSKKGPDGL. 2 stretches are compositionally biased toward basic and acidic residues: residues 100–110 and 126–140; these read PDTDQTLKKEG and DPLEKRSLPDPRMDD. The span at 165 to 174 shows a compositional bias: acidic residues; the sequence is DDLDDEDYEE. The segment at 209–246 adopts a C2H2-type; atypical zinc-finger fold; the sequence is YACDNSYKQKHSLKPPDRVCGKRYKNRPGLSYHYAHSH. The span at 267–277 shows a compositional bias: basic and acidic residues; it reads RSEEQKSKKGP. 2 PHD-type zinc fingers span residues 284–344 and 341–391; these read NNYC…CKCC and CKCC…CLDL.

Belongs to the requiem/DPF family.

It localises to the cytoplasm. The protein resides in the nucleus. Functionally, may be a transcription factor required for the apoptosis response following survival factor withdrawal from myeloid cells. Might also have a role in the development and maturation of lymphoid cells. This is Zinc finger protein ubi-d4 (REQ) from Gallus gallus (Chicken).